A 276-amino-acid chain; its full sequence is Undecaprenyl-diphosphatase (276 aa).

The next 6 helical transmembrane spans lie at 43 to 63, 85 to 105, 109 to 129, 183 to 203, 214 to 234, and 249 to 269; these read RAMA…VWEF, GNLL…ADLI, LFNP…MLWA, AATE…AVYS, GDLP…MIAV, and FAWY…FGWV.

Belongs to the UppP family.

Its subcellular location is the cell inner membrane. The catalysed reaction is di-trans,octa-cis-undecaprenyl diphosphate + H2O = di-trans,octa-cis-undecaprenyl phosphate + phosphate + H(+). Functionally, catalyzes the dephosphorylation of undecaprenyl diphosphate (UPP). Confers resistance to bacitracin. The sequence is that of Undecaprenyl-diphosphatase from Pseudomonas putida (strain ATCC 700007 / DSM 6899 / JCM 31910 / BCRC 17059 / LMG 24140 / F1).